Reading from the N-terminus, the 232-residue chain is 2-C-methyl-D-erythritol 4-phosphate cytidylyltransferase (232 aa).

The protein belongs to the IspD/TarI cytidylyltransferase family. IspD subfamily.

It catalyses the reaction 2-C-methyl-D-erythritol 4-phosphate + CTP + H(+) = 4-CDP-2-C-methyl-D-erythritol + diphosphate. It functions in the pathway isoprenoid biosynthesis; isopentenyl diphosphate biosynthesis via DXP pathway; isopentenyl diphosphate from 1-deoxy-D-xylulose 5-phosphate: step 2/6. In terms of biological role, catalyzes the formation of 4-diphosphocytidyl-2-C-methyl-D-erythritol from CTP and 2-C-methyl-D-erythritol 4-phosphate (MEP). The polypeptide is 2-C-methyl-D-erythritol 4-phosphate cytidylyltransferase (Rhodococcus erythropolis (strain PR4 / NBRC 100887)).